Reading from the N-terminus, the 126-residue chain is Protein translocase subunit SecE (126 aa).

3 helical membrane passes run 18–38, 40–60, and 97–117; these read LKWV…YLYG, LSVV…LGVA, and IVLA…GIMV.

Belongs to the SecE/SEC61-gamma family. Component of the Sec protein translocase complex. Heterotrimer consisting of SecY, SecE and SecG subunits. The heterotrimers can form oligomers, although 1 heterotrimer is thought to be able to translocate proteins. Interacts with the ribosome. Interacts with SecDF, and other proteins may be involved. Interacts with SecA.

The protein localises to the cell inner membrane. In terms of biological role, essential subunit of the Sec protein translocation channel SecYEG. Clamps together the 2 halves of SecY. May contact the channel plug during translocation. The protein is Protein translocase subunit SecE of Vibrio cholerae serotype O1 (strain ATCC 39315 / El Tor Inaba N16961).